Consider the following 1451-residue polypeptide: DNA excision repair protein ERCC-6-like (1451 aa).

The stretch at 27-60 (YDRYRQKGKEAALNGELPRALELFQLAYQLQPSE) is one TPR 1 repeat. In terms of domain architecture, Helicase ATP-binding spans 118–286 (SLYRDGRKGG…WALFDFACQG (169 aa)). 131-138 (DDMGLGKT) contacts ATP. The short motif at 237-240 (DEAH) is the DEAH box element. One can recognise a Helicase C-terminal domain in the interval 479–639 (FVVSLMECLR…PFRYFSKQEL (161 aa)). Disordered regions lie at residues 647-669 (DTRS…RSDT), 778-804 (NSFD…ETAS), 935-1006 (DDTS…ATTD), 1035-1054 (DEEV…EFQL), 1063-1083 (LEEP…NYND), 1096-1140 (RSTP…LTSS), and 1182-1343 (LLEN…SAEL). The span at 781-804 (DEPEFEEDEQNLPSAEDAEMETAS) shows a compositional bias: acidic residues. 2 stretches are compositionally biased toward polar residues: residues 944 to 964 (SDFN…SPSL) and 992 to 1002 (QVLSSPLSQHE). S961 carries the post-translational modification Phosphoserine. Residues 1035–1050 (DEEVHEVEESAAEESP) are compositionally biased toward acidic residues. Basic and acidic residues predominate over residues 1063–1074 (LEEPSINHDKQN). Positions 1121-1132 (DTEEEEEEEEES) are enriched in acidic residues. The segment covering 1213 to 1230 (VQTSSGDNSKSYETSEAN) has biased composition (polar residues). The span at 1244–1278 (YREGKNTSDKVSESNETHSEEFAEEEKPSGDKSES) shows a compositional bias: basic and acidic residues. Over residues 1310 to 1341 (SEADESVVEEEEPSGETLNTEESEMGEEEESA) the composition is skewed to acidic residues. The stretch at 1402–1435 (YNLLVLSGKQSLAEGRKQEALDFFLKAIDINTGD) is one TPR 2 repeat.

The protein belongs to the SNF2/RAD54 helicase family.

The protein localises to the chromosome. The protein resides in the centromere. Its subcellular location is the kinetochore. It carries out the reaction ATP + H2O = ADP + phosphate + H(+). Functionally, DNA helicase that acts as a tension sensor that associates with catenated DNA which is stretched under tension until it is resolved during anaphase. Functions as ATP-dependent DNA translocase. Can promote Holliday junction branch migration (in vitro). The chain is DNA excision repair protein ERCC-6-like (ercc6l) from Danio rerio (Zebrafish).